A 449-amino-acid chain; its full sequence is uncharacterized protein (449 aa).

The region spanning V3–E61 is the TRAM domain. Positions 74, 80, 83, and 161 each coordinate [4Fe-4S] cluster. Residues Q283, Y312, E333, and D378 each contribute to the S-adenosyl-L-methionine site. The active-site Nucleophile is C405.

It belongs to the class I-like SAM-binding methyltransferase superfamily. RNA M5U methyltransferase family.

This is an uncharacterized protein from Thermosynechococcus vestitus (strain NIES-2133 / IAM M-273 / BP-1).